The following is a 254-amino-acid chain: PSME3-interacting protein (254 aa).

An N-acetylmethionine modification is found at methionine 1. Serine 17 carries the post-translational modification Phosphoserine. Residues 22–39 (DERRKRRQEEWEKVRKPE) are compositionally biased toward basic and acidic residues. Residues 22-52 (DERRKRRQEEWEKVRKPEDPEECPEEVYDPR) are disordered. Lysine 139 bears the N6-acetyllysine mark. The segment at 155 to 195 (GAVKHKSSESGNSVKRLKPDPEPDDKNQEPSSCKSLGNTSL) is disordered. The span at 171–182 (LKPDPEPDDKNQ) shows a compositional bias: basic and acidic residues. Residues 183–195 (EPSSCKSLGNTSL) are compositionally biased toward polar residues. The tract at residues 201–254 (HCPSAAVCIGILPGLGAYSGSSDSESSSDSEGTINATGKIVSSIFRTNTFLEAP) is interaction with PSME3. A phosphoserine; by CK2 mark is found at serine 222 and serine 228.

In terms of assembly, interacts (via C-terminus) with both free and 20S proteasome-bound forms of the proteasome activator complex subunit PSME3; the interaction is direct. Phosphorylation by CK2 stabilizes the interaction with PSME3.

Its subcellular location is the nucleus. In terms of biological role, promotes the association of the proteasome activator complex subunit PSME3 with the 20S proteasome and regulates its activity. Inhibits PSME3-mediated degradation of some proteasome substrates, probably by affecting their diffusion rate into the catalytic chamber of the proteasome. Also inhibits the interaction of PSME3 with COIL, inhibits accumulation of PSME3 in Cajal bodies and positively regulates the number of Cajal bodies in the nucleus. The sequence is that of PSME3-interacting protein from Homo sapiens (Human).